The sequence spans 95 residues: Integration host factor subunit beta (95 aa).

Belongs to the bacterial histone-like protein family. Heterodimer of an alpha and a beta chain.

In terms of biological role, this protein is one of the two subunits of integration host factor, a specific DNA-binding protein that functions in genetic recombination as well as in transcriptional and translational control. This is Integration host factor subunit beta from Shewanella putrefaciens (strain CN-32 / ATCC BAA-453).